The sequence spans 329 residues: Beta-ketoacyl-[acyl-carrier-protein] synthase III (329 aa).

Residues C113 and H255 contribute to the active site. The tract at residues 256-260 (QANQR) is ACP-binding. The active site involves N285.

Belongs to the thiolase-like superfamily. FabH family. Homodimer.

The protein localises to the cytoplasm. It catalyses the reaction malonyl-[ACP] + acetyl-CoA + H(+) = 3-oxobutanoyl-[ACP] + CO2 + CoA. It participates in lipid metabolism; fatty acid biosynthesis. Its function is as follows. Catalyzes the condensation reaction of fatty acid synthesis by the addition to an acyl acceptor of two carbons from malonyl-ACP. Catalyzes the first condensation reaction which initiates fatty acid synthesis and may therefore play a role in governing the total rate of fatty acid production. Possesses both acetoacetyl-ACP synthase and acetyl transacylase activities. Its substrate specificity determines the biosynthesis of branched-chain and/or straight-chain of fatty acids. The chain is Beta-ketoacyl-[acyl-carrier-protein] synthase III from Chlorobaculum tepidum (strain ATCC 49652 / DSM 12025 / NBRC 103806 / TLS) (Chlorobium tepidum).